A 222-amino-acid polypeptide reads, in one-letter code: Ras-related protein Rab11D (222 aa).

22–29 contacts GTP; sequence GDSAVGKS. Residues 44 to 52 carry the Effector region motif; that stretch reads SKATIGVEF. GTP is bound by residues 70-74 and 128-131; these read DTAGQ and NKTD. S-geranylgeranyl cysteine attachment occurs at residues C219 and C220.

It belongs to the small GTPase superfamily. Rab family.

The protein localises to the cell membrane. The protein is Ras-related protein Rab11D (RAB11D) of Nicotiana tabacum (Common tobacco).